A 495-amino-acid polypeptide reads, in one-letter code: Probable cytosol aminopeptidase (495 aa).

Positions 264 and 269 each coordinate Mn(2+). The active site involves K276. Mn(2+)-binding residues include D287, D346, and E348. R350 is an active-site residue.

It belongs to the peptidase M17 family. It depends on Mn(2+) as a cofactor.

The protein localises to the cytoplasm. The enzyme catalyses Release of an N-terminal amino acid, Xaa-|-Yaa-, in which Xaa is preferably Leu, but may be other amino acids including Pro although not Arg or Lys, and Yaa may be Pro. Amino acid amides and methyl esters are also readily hydrolyzed, but rates on arylamides are exceedingly low.. It catalyses the reaction Release of an N-terminal amino acid, preferentially leucine, but not glutamic or aspartic acids.. In terms of biological role, presumably involved in the processing and regular turnover of intracellular proteins. Catalyzes the removal of unsubstituted N-terminal amino acids from various peptides. The polypeptide is Probable cytosol aminopeptidase (Geotalea uraniireducens (strain Rf4) (Geobacter uraniireducens)).